The following is a 240-amino-acid chain: DNA repair protein RecO (240 aa).

The protein belongs to the RecO family.

In terms of biological role, involved in DNA repair and RecF pathway recombination. In Wolbachia sp. subsp. Drosophila simulans (strain wRi), this protein is DNA repair protein RecO.